Here is a 165-residue protein sequence, read N- to C-terminus: Phosphopantetheine adenylyltransferase (165 aa).

Serine 9 provides a ligand contact to substrate. ATP is bound by residues 9-10 (SF) and histidine 17. Substrate contacts are provided by lysine 41, leucine 73, and lysine 87. ATP-binding positions include 88 to 90 (GLR), glutamate 98, and 122 to 128 (YSFLSSS).

The protein belongs to the bacterial CoaD family. Homohexamer. Requires Mg(2+) as cofactor.

It localises to the cytoplasm. The catalysed reaction is (R)-4'-phosphopantetheine + ATP + H(+) = 3'-dephospho-CoA + diphosphate. Its pathway is cofactor biosynthesis; coenzyme A biosynthesis; CoA from (R)-pantothenate: step 4/5. Functionally, reversibly transfers an adenylyl group from ATP to 4'-phosphopantetheine, yielding dephospho-CoA (dPCoA) and pyrophosphate. This Acidothermus cellulolyticus (strain ATCC 43068 / DSM 8971 / 11B) protein is Phosphopantetheine adenylyltransferase.